Reading from the N-terminus, the 183-residue chain is Large ribosomal subunit protein bL27m (183 aa).

The N-terminal 34 residues, 1–34 (MFLRPTSIPSAVSQIRAQLFAGPSSLASQIQVRW), are a transit peptide targeting the mitochondrion.

This sequence belongs to the bacterial ribosomal protein bL27 family.

The protein resides in the mitochondrion. The protein is Large ribosomal subunit protein bL27m (RPL27) of Cryptococcus neoformans var. neoformans serotype D (strain B-3501A) (Filobasidiella neoformans).